The chain runs to 354 residues: Uroporphyrinogen decarboxylase (354 aa).

Substrate-binding positions include 27–31 (RQAGR), aspartate 77, tyrosine 154, threonine 209, and histidine 327.

It belongs to the uroporphyrinogen decarboxylase family. In terms of assembly, homodimer.

The protein resides in the cytoplasm. The catalysed reaction is uroporphyrinogen III + 4 H(+) = coproporphyrinogen III + 4 CO2. The protein operates within porphyrin-containing compound metabolism; protoporphyrin-IX biosynthesis; coproporphyrinogen-III from 5-aminolevulinate: step 4/4. Catalyzes the decarboxylation of four acetate groups of uroporphyrinogen-III to yield coproporphyrinogen-III. This Edwardsiella ictaluri (strain 93-146) protein is Uroporphyrinogen decarboxylase.